We begin with the raw amino-acid sequence, 497 residues long: Indoleacetaldoxime dehydratase (497 aa).

A helical membrane pass occupies residues 2-20 (EMILSISLCLTTLITLLLL). Residue Cys439 coordinates heme.

The protein belongs to the cytochrome P450 family.

The protein localises to the membrane. The enzyme catalyses (E)-(indol-3-yl)acetaldehyde oxime = (indol-3-yl)acetonitrile + H2O. In terms of biological role, involved in the biosynthesis of the indole-derived phytoalexin camalexin. Catalyzes the conversion of indole-3-acetaldoxime to indole-3-acetonitrile. Required for resistance to A.brassicicola and B.cinerea. The protein is Indoleacetaldoxime dehydratase (CYP71A13) of Arabidopsis thaliana (Mouse-ear cress).